Consider the following 135-residue polypeptide: Ribonuclease P protein component (135 aa).

This sequence belongs to the RnpA family. Consists of a catalytic RNA component (M1 or rnpB) and a protein subunit.

It carries out the reaction Endonucleolytic cleavage of RNA, removing 5'-extranucleotides from tRNA precursor.. Its function is as follows. RNaseP catalyzes the removal of the 5'-leader sequence from pre-tRNA to produce the mature 5'-terminus. It can also cleave other RNA substrates such as 4.5S RNA. The protein component plays an auxiliary but essential role in vivo by binding to the 5'-leader sequence and broadening the substrate specificity of the ribozyme. The polypeptide is Ribonuclease P protein component (Pseudomonas aeruginosa (strain ATCC 15692 / DSM 22644 / CIP 104116 / JCM 14847 / LMG 12228 / 1C / PRS 101 / PAO1)).